The sequence spans 430 residues: Enolase (430 aa).

Q165 contributes to the (2R)-2-phosphoglycerate binding site. E207 acts as the Proton donor in catalysis. D244, E287, and D314 together coordinate Mg(2+). The (2R)-2-phosphoglycerate site is built by K339, R368, S369, and K390. The active-site Proton acceptor is K339.

Belongs to the enolase family. Component of the RNA degradosome, a multiprotein complex involved in RNA processing and mRNA degradation. Requires Mg(2+) as cofactor.

Its subcellular location is the cytoplasm. It localises to the secreted. The protein resides in the cell surface. It catalyses the reaction (2R)-2-phosphoglycerate = phosphoenolpyruvate + H2O. It participates in carbohydrate degradation; glycolysis; pyruvate from D-glyceraldehyde 3-phosphate: step 4/5. In terms of biological role, catalyzes the reversible conversion of 2-phosphoglycerate (2-PG) into phosphoenolpyruvate (PEP). It is essential for the degradation of carbohydrates via glycolysis. This chain is Enolase, found in Stenotrophomonas maltophilia (strain R551-3).